The following is a 341-amino-acid chain: D-aspartate oxidase (341 aa).

Residues aspartate 36, lysine 37, threonine 43, serine 44, methionine 50, glycine 307, isoleucine 311, and serine 312 each contribute to the FAD site. Positions 339-341 (SNL) match the Microbody targeting signal motif.

It belongs to the DAMOX/DASOX family. As to quaternary structure, monomer. Interacts with PEX5; the interaction is direct and required for localization of DDO to the peroxisome. Interacts with DAOA; the interaction is direct and increases the degradation rate of DDO. Requires FAD as cofactor. In terms of processing, may be S-nitrosylated. As to expression, expressed in epithelial cells of the proximal nephron tubules in the renal cortex (at protein level). In the brain, expressed in the frontal, temporal, and occipital lobes of the cortex, hippocampus, striatum, diencephalon, brainstem, cerebellum, spinal cord, plexus choroiderus and ependyma (at protein level). Expression is increased in the prefrontal cortex of schizophrenic patients. Levels are normal in the superior frontal gyrus of patients with Alzheimer's disease.

Its subcellular location is the peroxisome matrix. The protein localises to the cytoplasm. It is found in the cytosol. It carries out the reaction D-aspartate + O2 + H2O = oxaloacetate + H2O2 + NH4(+). It catalyses the reaction D-glutamate + O2 + H2O = H2O2 + 2-oxoglutarate + NH4(+). With respect to regulation, inhibited by the benzodiazepine olanzapine. Inhibited by aminooxyacetic acid, thiolactomycin, malonate and meso-tartrate. Clozapine, haloperidol and chlorpromazine have no effect on activity. Not inhibited by sodium, potassium, magnesium, iron, calcium, cobalt, copper, nickel, manganese or zinc ions. Not inhibited by AMP, ADP, ATP, or cAMP. Not inhibited by pyridoxal 5'-phosphate. Its function is as follows. Selectively catalyzes the oxidative deamination of acidic amino acids. Suppresses the level of D-aspartate in the brain, an amino acid that can act as an agonist for glutamate receptors. Protects the organism from the toxicity of D-amino acids. May also function in the intestine. This Homo sapiens (Human) protein is D-aspartate oxidase (DDO).